The following is a 388-amino-acid chain: Succinate--CoA ligase [ADP-forming] subunit beta (388 aa).

The 236-residue stretch at 9-244 (KQLFAEYGLP…PSQDDAREAH (236 aa)) folds into the ATP-grasp domain. Residues K46, 53-55 (GRG), E99, T102, and E107 contribute to the ATP site. Mg(2+) contacts are provided by N199 and D213. Residues N264 and 321–323 (GIV) contribute to the substrate site.

This sequence belongs to the succinate/malate CoA ligase beta subunit family. As to quaternary structure, heterotetramer of two alpha and two beta subunits. Mg(2+) serves as cofactor.

It carries out the reaction succinate + ATP + CoA = succinyl-CoA + ADP + phosphate. It catalyses the reaction GTP + succinate + CoA = succinyl-CoA + GDP + phosphate. It participates in carbohydrate metabolism; tricarboxylic acid cycle; succinate from succinyl-CoA (ligase route): step 1/1. In terms of biological role, succinyl-CoA synthetase functions in the citric acid cycle (TCA), coupling the hydrolysis of succinyl-CoA to the synthesis of either ATP or GTP and thus represents the only step of substrate-level phosphorylation in the TCA. The beta subunit provides nucleotide specificity of the enzyme and binds the substrate succinate, while the binding sites for coenzyme A and phosphate are found in the alpha subunit. This Pseudomonas entomophila (strain L48) protein is Succinate--CoA ligase [ADP-forming] subunit beta.